We begin with the raw amino-acid sequence, 471 residues long: 6-phosphofructo-2-kinase/fructose-2,6-bisphosphatase 1 (471 aa).

N-acetylserine is present on S2. Residues 2–250 (SREMGELTQT…AYYLMNIHVT (249 aa)) are 6-phosphofructo-2-kinase. A Phosphoserine; by PKA modification is found at S33. Position 49–57 (49–57 (GLPARGKTY)) interacts with ATP. Beta-D-fructose 6-phosphate-binding residues include R82 and R105. D131 is a catalytic residue. 2 residues coordinate beta-D-fructose 6-phosphate: T133 and R139. S141 bears the Phosphoserine mark. C161 is an active-site residue. 170-175 (NIKQVK) lines the ATP pocket. K175, R196, and Y200 together coordinate beta-D-fructose 6-phosphate. A fructose-2,6-bisphosphatase region spans residues 251–471 (PRSIYLCRHG…EALDTVPAHY (221 aa)). Residue R258 coordinates beta-D-fructose 2,6-bisphosphate. Catalysis depends on H259, which acts as the Tele-phosphohistidine intermediate. Beta-D-fructose 2,6-bisphosphate-binding residues include N265, G271, and R308. E328 functions as the Proton donor/acceptor in the catalytic mechanism. The beta-D-fructose 2,6-bisphosphate site is built by Y339, R353, K357, Y368, Q394, and R398. 350-353 (FALR) provides a ligand contact to ATP. ATP is bound by residues 394–398 (QAVMR) and Y430.

The protein in the C-terminal section; belongs to the phosphoglycerate mutase family. Homodimer. In terms of tissue distribution, liver.

It catalyses the reaction beta-D-fructose 2,6-bisphosphate + H2O = beta-D-fructose 6-phosphate + phosphate. The enzyme catalyses beta-D-fructose 6-phosphate + ATP = beta-D-fructose 2,6-bisphosphate + ADP + H(+). Its activity is regulated as follows. Phosphorylation at Ser-33 inhibits the kinase and activates the bisphosphatase. Synthesis and degradation of fructose 2,6-bisphosphate. The sequence is that of 6-phosphofructo-2-kinase/fructose-2,6-bisphosphatase 1 from Mus musculus (Mouse).